Here is a 75-residue protein sequence, read N- to C-terminus: Protein Tlp homolog (75 aa).

The protein belongs to the Tlp family.

This chain is Protein Tlp homolog, found in Clostridium acetobutylicum (strain ATCC 824 / DSM 792 / JCM 1419 / IAM 19013 / LMG 5710 / NBRC 13948 / NRRL B-527 / VKM B-1787 / 2291 / W).